Here is a 404-residue protein sequence, read N- to C-terminus: Diaminopropionate ammonia-lyase (404 aa).

K78 carries the N6-(pyridoxal phosphate)lysine modification.

It belongs to the diaminopropionate ammonia-lyase family. In terms of assembly, homodimer. Pyridoxal 5'-phosphate is required as a cofactor.

It carries out the reaction (S)-2,3-diaminopropanoate + H2O + H(+) = pyruvate + 2 NH4(+). It catalyses the reaction (R)-2,3-diaminopropanoate + H2O + H(+) = pyruvate + 2 NH4(+). Competitively inhibited by L- and D-alanine. Catalyzes the alpha,beta-elimination reaction of both L- and D-alpha,beta-diaminopropionate (DAP) to form pyruvate and ammonia. In vitro L- and D-isomers of serine are also degraded, though slowly; it is the only serine dehydratase which can eliminate an amino group at the beta-carbon position. In vivo L-, D- and a mixure of DL-DAP allow growth. DL-DAP is toxic in the absence of this enzyme, it may inhibit enzymes involved in the synthesis of pyruvate and aspartate, as well as amino acids derived from them. In Salmonella typhimurium (strain LT2 / SGSC1412 / ATCC 700720), this protein is Diaminopropionate ammonia-lyase (dpaL).